The primary structure comprises 845 residues: Protein translocase subunit SecA 1 (845 aa).

ATP-binding positions include Gln91, 109 to 113, and Asp498; that span reads GEGKT. The tract at residues 795–845 is disordered; the sequence is TDFGTAQHVSAEDGKEKAKKQPIVKGDKVGRNDPCPCGSGKKYKNCHGKEE. The Zn(2+) site is built by Cys829, Cys831, Cys840, and His841. Over residues 835-845 the composition is skewed to basic residues; that stretch reads KKYKNCHGKEE.

Belongs to the SecA family. Monomer and homodimer. Part of the essential Sec protein translocation apparatus which comprises SecA, SecYEG and auxiliary proteins SecDF. Other proteins may also be involved. Zn(2+) serves as cofactor.

The protein resides in the cell membrane. It localises to the cytoplasm. The catalysed reaction is ATP + H2O + cellular proteinSide 1 = ADP + phosphate + cellular proteinSide 2.. Part of the Sec protein translocase complex. Interacts with the SecYEG preprotein conducting channel. Has a central role in coupling the hydrolysis of ATP to the transfer of proteins into and across the cell membrane, serving as an ATP-driven molecular motor driving the stepwise translocation of polypeptide chains across the membrane. In Staphylococcus haemolyticus (strain JCSC1435), this protein is Protein translocase subunit SecA 1.